The chain runs to 447 residues: Cysteine--tRNA ligase (447 aa).

A Zn(2+)-binding site is contributed by C28. Residues 30–40 (PTVYNYIHVGN) carry the 'HIGH' region motif. Zn(2+) contacts are provided by C211, H236, and E240. A 'KMSKS' region motif is present at residues 268–272 (KMSKS). K271 provides a ligand contact to ATP.

The protein belongs to the class-I aminoacyl-tRNA synthetase family. In terms of assembly, monomer. Zn(2+) is required as a cofactor.

It localises to the cytoplasm. The enzyme catalyses tRNA(Cys) + L-cysteine + ATP = L-cysteinyl-tRNA(Cys) + AMP + diphosphate. In Streptococcus mutans serotype c (strain ATCC 700610 / UA159), this protein is Cysteine--tRNA ligase.